Consider the following 201-residue polypeptide: Prostamide/prostaglandin F synthase (201 aa).

A Phosphotyrosine modification is found at Tyr-108.

The protein belongs to the peroxiredoxin-like PRXL2 family. Prostamide/prostaglandin F synthase subfamily.

The protein resides in the cytoplasm. It localises to the cytosol. It catalyses the reaction prostaglandin H2 + [thioredoxin]-dithiol = prostaglandin F2alpha + [thioredoxin]-disulfide. The enzyme catalyses prostamide F2alpha + [thioredoxin]-disulfide = prostamide H2 + [thioredoxin]-dithiol. In terms of biological role, catalyzes the reduction of prostaglandin-ethanolamide H(2) (prostamide H(2)) to prostamide F(2alpha) with NADPH as proton donor. Also able to reduce prostaglandin H(2) to prostaglandin F(2alpha). The chain is Prostamide/prostaglandin F synthase (PRXL2B) from Bos taurus (Bovine).